A 481-amino-acid chain; its full sequence is Alpha-L-arabinofuranosidase 43 (481 aa).

An N-terminal signal peptide occupies residues 1–19 (MRFSVFTAAIAAAFSACCA). Residues asparagine 158, asparagine 176, and asparagine 365 are each glycosylated (N-linked (GlcNAc...) asparagine).

It belongs to the glycosyl hydrolase 43 family.

It localises to the secreted. It carries out the reaction Hydrolysis of terminal non-reducing alpha-L-arabinofuranoside residues in alpha-L-arabinosides.. Its activity is regulated as follows. Activity is significantly inhibited by SDS and partially inhibited by Ag(+), Fe(3+) and beta-mercaptoethanol. Alpha-L-arabinofuranosidase specific for the cleavage of alpha-1,3-linkage. Shows high activity against 4-nitrophenyl alpha-L-arabinofuranoside, debranched arabinan, and sugar beet arabinan. In Humicola insolens (Soft-rot fungus), this protein is Alpha-L-arabinofuranosidase 43.